The following is an 858-amino-acid chain: G2-specific protein kinase nim-1 (858 aa).

The Protein kinase domain occupies 7–290; that stretch reads YELLEKIGHG…TATLLNLPIV (284 aa). ATP-binding positions include 13–21 and Lys36; that span reads IGHGSFGII. Catalysis depends on Asp161, which acts as the Proton acceptor. Phosphothreonine; by autocatalysis is present on Thr194. The stretch at 291–383 forms a coiled coil; the sequence is RLMRKEKEVV…QARVEAELQR (93 aa). Disordered regions lie at residues 495 to 693 and 747 to 858; these read TKAP…LPQA and SAVD…LSQS. The segment covering 516-525 has biased composition (basic and acidic residues); the sequence is SNWEVPRETE. The segment covering 526 to 535 has biased composition (acidic residues); it reads MIDSGDESEA. Polar residues-rich tracts occupy residues 548–572 and 580–598; these read SSKN…NSNV and SKQT…SSIG. Over residues 636-648 the composition is skewed to low complexity; that stretch reads SANNINNSSNGGS. The span at 650–661 shows a compositional bias: polar residues; that stretch reads APSSTVTSNITV. The span at 676–691 shows a compositional bias: low complexity; it reads SSFSQQQNNQPQQSLP. Residues 760–780 show a composition bias toward polar residues; it reads GQSQLPTRPRSQPQPITANFE. Residues 781-802 show a composition bias toward low complexity; sequence QQQQQQQSNTNSISSSNSAGSG.

The protein belongs to the protein kinase superfamily. CAMK Ser/Thr protein kinase family.

It is found in the nucleus. It carries out the reaction L-seryl-[protein] + ATP = O-phospho-L-seryl-[protein] + ADP + H(+). The catalysed reaction is L-threonyl-[protein] + ATP = O-phospho-L-threonyl-[protein] + ADP + H(+). Functionally, protein kinase that plays an important role in mitotic regulation. This is G2-specific protein kinase nim-1 (nim-1) from Neurospora crassa (strain ATCC 24698 / 74-OR23-1A / CBS 708.71 / DSM 1257 / FGSC 987).